The sequence spans 493 residues: Glutamate--tRNA ligase (493 aa).

Positions 10–20 match the 'HIGH' region motif; that stretch reads PSPTGDPHVGT. Positions 251 to 255 match the 'KMSKS' region motif; it reads KLSKR. K254 lines the ATP pocket.

The protein belongs to the class-I aminoacyl-tRNA synthetase family. Glutamate--tRNA ligase type 1 subfamily. In terms of assembly, monomer.

It is found in the cytoplasm. It carries out the reaction tRNA(Glu) + L-glutamate + ATP = L-glutamyl-tRNA(Glu) + AMP + diphosphate. Catalyzes the attachment of glutamate to tRNA(Glu) in a two-step reaction: glutamate is first activated by ATP to form Glu-AMP and then transferred to the acceptor end of tRNA(Glu). In Pseudomonas syringae pv. syringae (strain B728a), this protein is Glutamate--tRNA ligase.